The following is a 166-amino-acid chain: Small ribosomal subunit protein uS5 (166 aa).

The region spanning 12–75 (YIEKLVQVNR…EAARRNMIQV (64 aa)) is the S5 DRBM domain.

This sequence belongs to the universal ribosomal protein uS5 family. As to quaternary structure, part of the 30S ribosomal subunit. Contacts proteins S4 and S8.

In terms of biological role, with S4 and S12 plays an important role in translational accuracy. Its function is as follows. Located at the back of the 30S subunit body where it stabilizes the conformation of the head with respect to the body. The polypeptide is Small ribosomal subunit protein uS5 (Pseudomonas putida (strain ATCC 700007 / DSM 6899 / JCM 31910 / BCRC 17059 / LMG 24140 / F1)).